Consider the following 196-residue polypeptide: DnaA initiator-associating protein DiaA (196 aa).

Residues 34 to 196 (LVHSLLNGNK…DNTLFLHQDD (163 aa)) enclose the SIS domain.

The protein belongs to the SIS family. DiaA subfamily. In terms of assembly, homotetramer; dimer of dimers.

Required for the timely initiation of chromosomal replication via direct interactions with the DnaA initiator protein. This is DnaA initiator-associating protein DiaA from Salmonella paratyphi A (strain ATCC 9150 / SARB42).